We begin with the raw amino-acid sequence, 385 residues long: Lipid-A-disaccharide synthase (385 aa).

The protein belongs to the LpxB family.

The catalysed reaction is a lipid X + a UDP-2-N,3-O-bis[(3R)-3-hydroxyacyl]-alpha-D-glucosamine = a lipid A disaccharide + UDP + H(+). Its pathway is bacterial outer membrane biogenesis; LPS lipid A biosynthesis. Functionally, condensation of UDP-2,3-diacylglucosamine and 2,3-diacylglucosamine-1-phosphate to form lipid A disaccharide, a precursor of lipid A, a phosphorylated glycolipid that anchors the lipopolysaccharide to the outer membrane of the cell. This is Lipid-A-disaccharide synthase from Xylella fastidiosa (strain M23).